Here is a 291-residue protein sequence, read N- to C-terminus: Bis(5'-nucleosyl)-tetraphosphatase, symmetrical (291 aa).

It belongs to the Ap4A hydrolase family.

It carries out the reaction P(1),P(4)-bis(5'-adenosyl) tetraphosphate + H2O = 2 ADP + 2 H(+). Its function is as follows. Hydrolyzes diadenosine 5',5'''-P1,P4-tetraphosphate to yield ADP. The sequence is that of Bis(5'-nucleosyl)-tetraphosphatase, symmetrical from Coxiella burnetii (strain CbuG_Q212) (Coxiella burnetii (strain Q212)).